The primary structure comprises 135 residues: Protein PsiE homolog (135 aa).

4 helical membrane passes run 20–40, 54–74, 82–102, and 107–127; these read VGLI…TIHL, YMLI…ALIV, HFPL…LIIV, and PIDT…LYLA.

Belongs to the PsiE family.

It localises to the cell inner membrane. This is Protein PsiE homolog from Yersinia pseudotuberculosis serotype IB (strain PB1/+).